Here is a 70-residue protein sequence, read N- to C-terminus: ATP synthase subunit c (70 aa).

The next 2 helical transmembrane spans lie at 4 to 24 and 45 to 65; these read IAAA…NGLI and IMFI…VIAF.

This sequence belongs to the ATPase C chain family. As to quaternary structure, F-type ATPases have 2 components, F(1) - the catalytic core - and F(0) - the membrane proton channel. F(1) has five subunits: alpha(3), beta(3), gamma(1), delta(1), epsilon(1). F(0) has three main subunits: a(1), b(2) and c(10-14). The alpha and beta chains form an alternating ring which encloses part of the gamma chain. F(1) is attached to F(0) by a central stalk formed by the gamma and epsilon chains, while a peripheral stalk is formed by the delta and b chains.

The protein localises to the cell membrane. Its function is as follows. F(1)F(0) ATP synthase produces ATP from ADP in the presence of a proton or sodium gradient. F-type ATPases consist of two structural domains, F(1) containing the extramembraneous catalytic core and F(0) containing the membrane proton channel, linked together by a central stalk and a peripheral stalk. During catalysis, ATP synthesis in the catalytic domain of F(1) is coupled via a rotary mechanism of the central stalk subunits to proton translocation. In terms of biological role, key component of the F(0) channel; it plays a direct role in translocation across the membrane. A homomeric c-ring of between 10-14 subunits forms the central stalk rotor element with the F(1) delta and epsilon subunits. This chain is ATP synthase subunit c, found in Staphylococcus aureus (strain Mu3 / ATCC 700698).